A 268-amino-acid polypeptide reads, in one-letter code: Ribosomal RNA large subunit methyltransferase E (268 aa).

Residues G50, W52, D68, D84, and D109 each coordinate S-adenosyl-L-methionine. K149 serves as the catalytic Proton acceptor. The TRAM domain maps to 196 to 254; it reads PLRKGDKFVVDIEKLGSSGDGAVLIEGFVVFVKEVEVGEKVRIKISDVKPNFAFADVEE.

This sequence belongs to the class I-like SAM-binding methyltransferase superfamily. RNA methyltransferase RlmE family.

Its subcellular location is the cytoplasm. The catalysed reaction is uridine(2552) in 23S rRNA + S-adenosyl-L-methionine = 2'-O-methyluridine(2552) in 23S rRNA + S-adenosyl-L-homocysteine + H(+). Its function is as follows. Specifically methylates the uridine in position 2552 of 23S rRNA at the 2'-O position of the ribose in the fully assembled 50S ribosomal subunit. The protein is Ribosomal RNA large subunit methyltransferase E of Methanosarcina mazei (strain ATCC BAA-159 / DSM 3647 / Goe1 / Go1 / JCM 11833 / OCM 88) (Methanosarcina frisia).